We begin with the raw amino-acid sequence, 93 residues long: uncharacterized protein (93 aa).

This is an uncharacterized protein from Bacillus subtilis (strain 168).